A 467-amino-acid polypeptide reads, in one-letter code: MMKKMTGKSFALSALVAASFMAAGAMASDKTEPRNEVYKDKFANQYNSWHDTAKSEEITDALAGDPSLVILWAGYGFAKDYNAPRGHMYAVTDVRNTLRTGAPTNAEDGPMPMACWSCKSPDVPRLIEEQGEDGYFKGKWAKGGPEVVNTIGCSDCHEKGTPKLRISRPFAERGMEALGTPFDKASKKDKQSMVCGQCHVEYYFEKKDDRKGFVKFPWDSGTTVEQMEAYYDAIEFSDWTHSLSKTPMLKAQHPGYETWKMGVHGKNDVSCVDCHMPKVTNDKGRKYTDHKVGNPFDRFDETCATCHSQSKEFLEGITKERYAKVKELKARAEGQLVKAHFEAAKAWEVGATEAEMKPILTDIRHAQWRWDFAIASHGVAAHAPEEALRILGTAVDKAADARVKLAQLLAKKGVTDAVAIPDISTKAKAQAALGMDMDKMNAEKEAFKKDMLPKWDAEAKKREATYK.

The signal sequence occupies residues 1-27 (MMKKMTGKSFALSALVAASFMAAGAMA). His-87 lines the heme c pocket. Positions 115, 118, and 119 each coordinate heme. Positions 153, 156, 157, 195, 198, and 199 each coordinate heme c. Ca(2+)-binding residues include Glu-201, Tyr-202, Lys-250, and Gln-252. Tyr-202 serves as a coordination point for substrate. Substrate is bound at residue His-253. Heme c-binding residues include His-264, Cys-271, Cys-274, His-275, His-290, Cys-303, Cys-306, His-307, and His-382.

It belongs to the cytochrome c-552 family. Ca(2+) is required as a cofactor. Requires heme c as cofactor.

Its subcellular location is the periplasm. The catalysed reaction is 6 Fe(III)-[cytochrome c] + NH4(+) + 2 H2O = 6 Fe(II)-[cytochrome c] + nitrite + 8 H(+). Its pathway is nitrogen metabolism; nitrate reduction (assimilation). In terms of biological role, catalyzes the reduction of nitrite to ammonia, consuming six electrons in the process. This is Cytochrome c-552 from Shewanella sp. (strain MR-4).